A 408-amino-acid chain; its full sequence is DNA primase DnaG (408 aa).

The 76-residue stretch at 166–241 folds into the Toprim domain; it reads EEIIIVEGRA…KIDYIARAPP (76 aa). 3 residues coordinate Mg(2+): Glu172, Asp215, and Asp217.

The protein belongs to the archaeal DnaG primase family. In terms of assembly, forms a ternary complex with MCM helicase and DNA. Component of the archaeal exosome complex. It depends on Mg(2+) as a cofactor.

The enzyme catalyses ssDNA + n NTP = ssDNA/pppN(pN)n-1 hybrid + (n-1) diphosphate.. Its function is as follows. RNA polymerase that catalyzes the synthesis of short RNA molecules used as primers for DNA polymerase during DNA replication. Also part of the exosome, which is a complex involved in RNA degradation. Acts as a poly(A)-binding protein that enhances the interaction between heteromeric, adenine-rich transcripts and the exosome. In Desulfurococcus amylolyticus (strain DSM 18924 / JCM 16383 / VKM B-2413 / 1221n) (Desulfurococcus kamchatkensis), this protein is DNA primase DnaG.